We begin with the raw amino-acid sequence, 113 residues long: U11-theraphotoxin-Hhn1a (113 aa).

The signal sequence occupies residues 1 to 21; sequence MNTVRVTFLLVFVLAVSLGQA. The propeptide occupies 22 to 74; the sequence is DKDENRMEMQGKTEQGKSYLDFAENLLLQKLEELEAKLLEEDSEESRNSRQKR. Cystine bridges form between cysteine 75-cysteine 90, cysteine 82-cysteine 95, and cysteine 89-cysteine 110.

This sequence belongs to the neurotoxin 14 (magi-1) family. 01 (HNTX-16) subfamily. Expressed by the venom gland.

It is found in the secreted. In terms of biological role, probable ion channel inhibitor. In Cyriopagopus hainanus (Chinese bird spider), this protein is U11-theraphotoxin-Hhn1a.